Here is a 420-residue protein sequence, read N- to C-terminus: 4-hydroxy-3-methylbut-2-en-1-yl diphosphate synthase (flavodoxin) (420 aa).

Residues Cys307, Cys310, Cys353, and Glu360 each coordinate [4Fe-4S] cluster.

The protein belongs to the IspG family. The cofactor is [4Fe-4S] cluster.

It catalyses the reaction (2E)-4-hydroxy-3-methylbut-2-enyl diphosphate + oxidized [flavodoxin] + H2O + 2 H(+) = 2-C-methyl-D-erythritol 2,4-cyclic diphosphate + reduced [flavodoxin]. It participates in isoprenoid biosynthesis; isopentenyl diphosphate biosynthesis via DXP pathway; isopentenyl diphosphate from 1-deoxy-D-xylulose 5-phosphate: step 5/6. Functionally, converts 2C-methyl-D-erythritol 2,4-cyclodiphosphate (ME-2,4cPP) into 1-hydroxy-2-methyl-2-(E)-butenyl 4-diphosphate. The chain is 4-hydroxy-3-methylbut-2-en-1-yl diphosphate synthase (flavodoxin) from Brucella melitensis biotype 2 (strain ATCC 23457).